We begin with the raw amino-acid sequence, 1607 residues long: Abnormal cell migration protein 38 (1607 aa).

Disordered stretches follow at residues 14–52, 67–93, 167–222, 326–425, 459–478, 549–594, 845–931, 1017–1061, 1141–1241, 1319–1378, 1392–1445, and 1517–1607; these read EFNK…SQDF, RLSP…QYHV, STSY…AAQA, GSSA…PPSQ, SPNT…GMDQ, MVHR…QHSY, YDEN…PETE, SVQV…DYDM, EPSP…VTPK, ETPN…KGQL, FANV…PQAV, and KVKT…STDP. 2 stretches are compositionally biased toward polar residues: residues 81 to 93 and 179 to 191; these read PGPS…QYHV and PSGN…NHQQ. The segment covering 195 to 205 has biased composition (low complexity); that stretch reads VPQVQQQPAKP. The segment covering 206-218 has biased composition (basic residues); that stretch reads KTTKKRPPPKKKT. The span at 327 to 341 shows a compositional bias: low complexity; sequence SSASSSAQPSQPAKK. Composition is skewed to polar residues over residues 349–371 and 379–425; these read VPNT…QITP and PTTT…PPSQ. Residues 585 to 594 show a composition bias toward low complexity; sequence NSHSQSQHSY. A compositionally biased stretch (acidic residues) spans 858–871; it reads EEPESESESEPEAE. Basic and acidic residues-rich tracts occupy residues 872-886 and 907-917; these read PEPK…EPAR and YRNESESTFDW. 3 stretches are compositionally biased toward low complexity: residues 1333 to 1354, 1395 to 1419, and 1584 to 1601; these read PNIP…SVSV, VPSS…VSAK, and LLGT…SSGL.

In terms of tissue distribution, expressed in gonad distal tip cells and gonad sheath cells.

It localises to the nucleus. It is found in the cytoplasm. Its function is as follows. During gonad development, involved in distal tip cell (DTC) migration from the dorsal side of the hermaphrodite body to the midbody which allows for the formation of gonad arms. Role in gonad DTC migration may be in association with integrin related proteins ina-1 and mig-15. The sequence is that of Abnormal cell migration protein 38 from Caenorhabditis elegans.